A 250-amino-acid polypeptide reads, in one-letter code: Type-1Ab cytolytic delta-endotoxin (250 aa).

The protein belongs to the cyt1/cyt2 endotoxin family. Post-translationally, active after proteolytic processing.

Its function is as follows. Kills the larvae of dipteran insects by making pores in the epithelial cell membrane of the insect midgut. The polypeptide is Type-1Ab cytolytic delta-endotoxin (cyt1Ab1) (Bacillus thuringiensis subsp. medellin).